A 434-amino-acid polypeptide reads, in one-letter code: uncharacterized protein (434 aa).

Residue lysine 216 is modified to N6-(pyridoxal phosphate)lysine.

This is an uncharacterized protein from Schizosaccharomyces pombe (strain 972 / ATCC 24843) (Fission yeast).